Here is a 512-residue protein sequence, read N- to C-terminus: GMP synthase [glutamine-hydrolyzing] (512 aa).

The 191-residue stretch at 7–197 folds into the Glutamine amidotransferase type-1 domain; the sequence is LVLVVDFGGQ…LFKVAGLKAD (191 aa). Cys-84 serves as the catalytic Nucleophile. Catalysis depends on residues His-171 and Glu-173. The GMPS ATP-PPase domain maps to 198 to 387; sequence WSMASFAEEK…LGIPHKLVWR (190 aa). Residue 225–231 participates in ATP binding; that stretch reads SGGVDSS.

Homodimer.

The enzyme catalyses XMP + L-glutamine + ATP + H2O = GMP + L-glutamate + AMP + diphosphate + 2 H(+). Its pathway is purine metabolism; GMP biosynthesis; GMP from XMP (L-Gln route): step 1/1. Functionally, catalyzes the synthesis of GMP from XMP. The protein is GMP synthase [glutamine-hydrolyzing] of Clostridium novyi (strain NT).